A 185-amino-acid chain; its full sequence is Elongation factor P (185 aa).

Belongs to the elongation factor P family.

The protein localises to the cytoplasm. It functions in the pathway protein biosynthesis; polypeptide chain elongation. Its function is as follows. Involved in peptide bond synthesis. Stimulates efficient translation and peptide-bond synthesis on native or reconstituted 70S ribosomes in vitro. Probably functions indirectly by altering the affinity of the ribosome for aminoacyl-tRNA, thus increasing their reactivity as acceptors for peptidyl transferase. The polypeptide is Elongation factor P (Clostridioides difficile (strain 630) (Peptoclostridium difficile)).